The primary structure comprises 165 residues: Xanthine-guanine phosphoribosyltransferase (165 aa).

5-phospho-alpha-D-ribose 1-diphosphate is bound by residues 41–42 (RG) and 98–106 (DDLTDTGKT). Mg(2+) is bound at residue aspartate 99. Guanine is bound by residues aspartate 102 and isoleucine 145. 2 residues coordinate xanthine: aspartate 102 and isoleucine 145. GMP contacts are provided by residues 102–106 (DTGKT) and 144–145 (WI).

This sequence belongs to the purine/pyrimidine phosphoribosyltransferase family. XGPT subfamily. As to quaternary structure, homotetramer. Requires Mg(2+) as cofactor.

Its subcellular location is the cell inner membrane. It carries out the reaction GMP + diphosphate = guanine + 5-phospho-alpha-D-ribose 1-diphosphate. It catalyses the reaction XMP + diphosphate = xanthine + 5-phospho-alpha-D-ribose 1-diphosphate. The catalysed reaction is IMP + diphosphate = hypoxanthine + 5-phospho-alpha-D-ribose 1-diphosphate. It participates in purine metabolism; GMP biosynthesis via salvage pathway; GMP from guanine: step 1/1. Its pathway is purine metabolism; XMP biosynthesis via salvage pathway; XMP from xanthine: step 1/1. In terms of biological role, purine salvage pathway enzyme that catalyzes the transfer of the ribosyl-5-phosphate group from 5-phospho-alpha-D-ribose 1-diphosphate (PRPP) to the N9 position of the 6-oxopurines guanine and xanthine to form the corresponding ribonucleotides GMP (guanosine 5'-monophosphate) and XMP (xanthosine 5'-monophosphate), with the release of PPi. To a lesser extent, also acts on hypoxanthine. This chain is Xanthine-guanine phosphoribosyltransferase, found in Brucella suis (strain ATCC 23445 / NCTC 10510).